Reading from the N-terminus, the 525-residue chain is G-protein regulator 2 (525 aa).

Positions 424–445 (PVDMMDLIFSMSSRMDDQRTEL) constitute a GoLoco domain. The tract at residues 489-525 (TMNRILKRSKKSKSSLDSTNSIQGDDTRSDDVTMTSK) is disordered.

Interacts with gpr-1; gpr-1 forms a complex with lin-5 and GDP-bound goa-1.

It is found in the cytoplasm. The protein localises to the cell cortex. Its subcellular location is the cytoskeleton. It localises to the spindle. In the 1-cell embryo, probably together with gpr-1, controls nuclear rotation and spindle elongation during mitosis. Complex of gpr-1 and gpr-2, in association with lin-5, activates G-protein signaling to affect mitotic spindle force. Polarity determinants (par genes) may regulate lin-5/gpr-1/gpr-2/goa-1 locally to create the asymmetric forces that drive spindle movement. This Caenorhabditis elegans protein is G-protein regulator 2 (gpr-2).